The primary structure comprises 358 residues: DNA-directed RNA polymerase subunit alpha (358 aa).

Positions 1–244 (MENKLFSCIE…NLFLSIYDTS (244 aa)) are alpha N-terminal domain (alpha-NTD). The alpha C-terminal domain (alpha-CTD) stretch occupies residues 287 to 358 (YKTSFDKNLT…KMVKYGTVNK (72 aa)).

The protein belongs to the RNA polymerase alpha chain family. In terms of assembly, homodimer. The RNAP catalytic core consists of 2 alpha, 1 beta, 1 beta' and 1 omega subunit. When a sigma factor is associated with the core the holoenzyme is formed, which can initiate transcription.

The protein localises to the plastid. The protein resides in the chloroplast. It catalyses the reaction RNA(n) + a ribonucleoside 5'-triphosphate = RNA(n+1) + diphosphate. Its function is as follows. DNA-dependent RNA polymerase catalyzes the transcription of DNA into RNA using the four ribonucleoside triphosphates as substrates. The sequence is that of DNA-directed RNA polymerase subunit alpha (rpoA) from Bigelowiella natans (Pedinomonas minutissima).